The following is a 53-amino-acid chain: UPF0391 membrane protein BURPS1106A_A2993 (53 aa).

The next 2 helical transmembrane spans lie at 5 to 25 (ALIF…GIAA) and 30 to 50 (IAKI…VLGV).

Belongs to the UPF0391 family.

Its subcellular location is the cell membrane. This Burkholderia pseudomallei (strain 1106a) protein is UPF0391 membrane protein BURPS1106A_A2993.